Consider the following 71-residue polypeptide: Large ribosomal subunit protein uL29 (71 aa).

This sequence belongs to the universal ribosomal protein uL29 family. As to quaternary structure, part of the 50S ribosomal subunit. Interacts with protein L23.

Its function is as follows. Stabilizes the tertiary rRNA structure within the 23S rRNA domain (domain I) to which it binds. Located at the polypeptide exit tunnel on the outside of the subunit. The chain is Large ribosomal subunit protein uL29 (rpl29) from Haloarcula marismortui (strain ATCC 43049 / DSM 3752 / JCM 8966 / VKM B-1809) (Halobacterium marismortui).